Here is a 354-residue protein sequence, read N- to C-terminus: Rhodopsin (354 aa).

Over 1–36 (MNGTEGPDFYVPMVNTTGIVRSPYDYPQYYLVNPAA) the chain is Extracellular. N-linked (GlcNAc...) asparagine glycosylation is found at Asn-2 and Asn-15. Residues 37–61 (FSMLAAYMFFLILVGFPVNFLTLYV) traverse the membrane as a helical segment. At 62-73 (TMEHKKLRTPLN) the chain is on the cytoplasmic side. The helical transmembrane segment at 74-96 (YILLNLAVANLFMVIGGFTTTMY) threads the bilayer. Residues 97-110 (TSMHGYFVLGRTGC) are Extracellular-facing. Cys-110 and Cys-187 are joined by a disulfide. Residues 111–133 (NLEGFFATLGGEIALWSLVVLAV) form a helical membrane-spanning segment. The 'Ionic lock' involved in activated form stabilization signature appears at 134 to 136 (ERW). Residues 134–152 (ERWVVVCKPISNFRFGENH) lie on the Cytoplasmic side of the membrane. Residues 153-173 (AVMGVSFTWLMACACSVPPLF) traverse the membrane as a helical segment. At 174–202 (GWSRYIPEGMQCSCGIDYYTRAPGYNNES) the chain is on the extracellular side. The helical transmembrane segment at 203–224 (FVIYMFVCHFSIPLTIIFFCYG) threads the bilayer. Residues 225 to 252 (RLLCAVKDAAAAQQESETTQRAEREVSR) are Cytoplasmic-facing. A helical membrane pass occupies residues 253–274 (MVVIMVIGFLICWLPYASVAWF). Residues 275-286 (IFTHQGSEFGPV) lie on the Extracellular side of the membrane. The chain crosses the membrane as a helical span at residues 287–308 (FMTIPAFFAKSSAIYNPMIYIC). Lys-296 is modified (N6-(retinylidene)lysine). Topologically, residues 309 to 354 (MNKQFRHCMITTLCCGKNPFEEEEGASTTASKTEASSVSSSHVSPA) are cytoplasmic. Residues Cys-322 and Cys-323 are each lipidated (S-palmitoyl cysteine). A disordered region spans residues 333–354 (GASTTASKTEASSVSSSHVSPA). Low complexity predominate over residues 334 to 354 (ASTTASKTEASSVSSSHVSPA).

This sequence belongs to the G-protein coupled receptor 1 family. Opsin subfamily. In terms of processing, phosphorylated on some or all of the serine and threonine residues present in the C-terminal region. Contains one covalently linked retinal chromophore.

The protein localises to the membrane. It localises to the cell projection. It is found in the cilium. The protein resides in the photoreceptor outer segment. Functionally, photoreceptor required for image-forming vision at low light intensity. While most salt water fish species use retinal as chromophore, most freshwater fish use 3-dehydroretinal, or a mixture of retinal and 3-dehydroretinal. Light-induced isomerization of 11-cis to all-trans retinal triggers a conformational change that activates signaling via G-proteins. Subsequent receptor phosphorylation mediates displacement of the bound G-protein alpha subunit by arrestin and terminates signaling. This Zeus faber (John Dory) protein is Rhodopsin (rho).